Here is a 189-residue protein sequence, read N- to C-terminus: Cancer/testis antigen family 45 member A3 (189 aa).

The disordered stretch occupies residues 81-119; it reads KDRMMQKPGSNAPVGGNVTSSFSGDDLECRETASSPKSQ.

It belongs to the CT45 family. Testis specific. Expressed in cancer cell lines.

It localises to the nucleus. The sequence is that of Cancer/testis antigen family 45 member A3 from Homo sapiens (Human).